We begin with the raw amino-acid sequence, 117 residues long: uncharacterized protein (117 aa).

Positions 1–18 are cleaved as a signal peptide; the sequence is MKFFWVSSLLGLLGLSTA. Asn-86 carries N-linked (GlcNAc...) asparagine glycosylation.

This is an uncharacterized protein from Schizosaccharomyces pombe (strain 972 / ATCC 24843) (Fission yeast).